Reading from the N-terminus, the 710-residue chain is ARM REPEAT PROTEIN INTERACTING WITH ABF2 (710 aa).

Residues 1–35 (MDQQPERREGRSFPERKGQKRKLEEGAAAVEDREI) are disordered. 9 ARM repeats span residues 85-127 (EDLV…EKGS), 138-185 (PEYQ…NLAH), 188-227 (SSIKTRVRVEGGIPPLVELLEFSDSKVQRAAAGALRTLAF), 230-269 (DDNKNQIVECNALPTLILMLGSEDAAIHYEAVGVIGNLVH), 272-311 (PHIKKEVLTAGALQPVIGLLSSCCPESQREAALLLGQFAS), 314-353 (SDCKVHIVQRGAVRPLIEMLQSPDVQLKEMSAFALGRLAQ), 355-394 (AHNQAGIAHSGGLGPLLKLLDSRNGSLQHNAAFALYGLAD), 429-468 (LKRLEEKIHGRVLRHLLYLMRISEKSIQRRVALALAHLCS), and 470-509 (EDQRTIFIDDNGLELLLGLLGSLNTKQQLDGAAALYKLAN). Residues 541–608 (SDVTFLVEGR…IYTGSVDITN (68 aa)) enclose the BTB domain.

Interacts with ABF2. Interacts with DUF7/AIP1. Detected in embryos and most of the vegetative and reproductive organs.

It is found in the nucleus. It functions in the pathway protein modification; protein ubiquitination. In terms of biological role, may act as a substrate-specific adapter of an E3 ubiquitin-protein ligase complex (CUL3-RBX1-BTB) which mediates the ubiquitination and subsequent proteasomal degradation of target proteins. Acts as a positive regulator of ABA response via the modulation of the transcriptional activity of ABF2, a transcription factor which controls ABA-dependent gene expression via the G-box-type ABA-responsive elements. Negative regulator of seed germination and young seedling growth. This Arabidopsis thaliana (Mouse-ear cress) protein is ARM REPEAT PROTEIN INTERACTING WITH ABF2 (ARIA).